Consider the following 345-residue polypeptide: Serpentine receptor class beta-13 (345 aa).

Topologically, residues 1 to 22 are extracellular; the sequence is MAGINQTKCDLGFQITFNTVYR. Asn-5 carries an N-linked (GlcNAc...) asparagine glycan. The chain crosses the membrane as a helical span at residues 23-43; the sequence is FSQFYTFSVSSFAVPGLIYFM. The Cytoplasmic segment spans residues 44-58; it reads FKRLFQLYFHGNLKT. Residues 59–79 traverse the membrane as a helical segment; that stretch reads LLIAYFISILLYAVMLCFAFG. The Extracellular portion of the chain corresponds to 80–103; sequence YQFFVPFFIKSNCDLIINKTLFKY. Asn-97 carries N-linked (GlcNAc...) asparagine glycosylation. The helical transmembrane segment at 104 to 124 threads the bilayer; the sequence is IHTSVIFLLTTPMMFPLGFSI. The Cytoplasmic segment spans residues 125–142; the sequence is ERFTAMAMASRYENIRTL. The chain crosses the membrane as a helical span at residues 143–163; that stretch reads IGPVLVIFLIIPNCIIFYFLF. Residues 164 to 189 are Extracellular-facing; sequence QHETYDDTFISFLMLPNTTAVNFNTY. N-linked (GlcNAc...) asparagine glycosylation is present at Asn-180. Residues 190–210 form a helical membrane-spanning segment; that stretch reads LWFLLYLNIGNLALNVLLLLV. At 211 to 241 the chain is on the cytoplasmic side; the sequence is HRKFKRRLLLHKTSLSTRYAIEEISQSSKFT. Residues 242–262 traverse the membrane as a helical segment; sequence LIITFTHLLFFGCNTICSILV. Topologically, residues 263–280 are extracellular; the sequence is RVLGEPFFGSFINHSVAR. Asn-275 carries N-linked (GlcNAc...) asparagine glycosylation. A helical membrane pass occupies residues 281–301; the sequence is GVNCAVPTYNLVIVVVGFVSL. Residues 302–345 are Cytoplasmic-facing; the sequence is SKLNSRRQQEVQTTVQLKTTGKEGARNYDNITANQWATITQIGF.

This sequence belongs to the nematode receptor-like protein srb family. In terms of tissue distribution, expressed in the head sensory neurons ASI, ASK and AWB. Not expressed in male somatic gonads or sperm.

It is found in the cell membrane. It localises to the perikaryon. The protein localises to the cell projection. The protein resides in the dendrite. In terms of biological role, G-protein coupled receptor that antagonizes the negative effects of the gcy-35 oxygen sensor on spermatogenesis. This leads to the maintenance of mitochondrial function in developing spermatocytes and/or spermatids prior to testis maturation during the early larval stages. Regulates the navigational capacity of sperm during hyperoxic conditions ensuring the proper targeting of sperm derived from males to the fertilization site in the uterus of hermaphrodites. May act in the same signaling pathway as the neuropeptide flp-21. The sequence is that of Serpentine receptor class beta-13 from Caenorhabditis elegans.